A 219-amino-acid chain; its full sequence is Chloramphenicol acetyltransferase (219 aa).

The Proton acceptor role is filled by His-193.

Belongs to the chloramphenicol acetyltransferase family. In terms of assembly, homotrimer.

It carries out the reaction chloramphenicol + acetyl-CoA = chloramphenicol 3-acetate + CoA. Its function is as follows. This enzyme is an effector of chloramphenicol resistance in bacteria. The polypeptide is Chloramphenicol acetyltransferase (cat) (Klebsiella sp).